The following is an 892-amino-acid chain: Dipeptidyl peptidase 8 (892 aa).

Catalysis depends on charge relay system residues S749, D827, and H859.

This sequence belongs to the peptidase S9B family. DPPIV subfamily. In terms of assembly, homodimer. Forms a ternary complex with NLRP1, composed of a DPP8 homodimer, one full-length NLRP1 protein, and one cleaved C-terminus of NLRP1 (NACHT, LRR and PYD domains-containing protein 1, C-terminus). Forms a ternary complex with CARD8, composed of a DPP8 homodimer, one full-length NLRP1 protein, and one cleaved C-terminus of CARD8 (Caspase recruitment domain-containing protein 8, C-terminus). In the ternary complex, only one subunit of the DPP8 homodimer is bound to NLRP1 or CARD8.

The protein localises to the cytoplasm. The enzyme catalyses Release of an N-terminal dipeptide, Xaa-Yaa-|-Zaa-, from a polypeptide, preferentially when Yaa is Pro, provided Zaa is neither Pro nor hydroxyproline.. Inhibited by zinc. Inhibited by the serine proteinase inhibitor 4-(2-aminoethyl)benzenesulphonyl fluoride (AEBSF), and by di-isopropylfluorophosphate. Specifically inhibited by isoindoline derivatives. Inhibited by Val-boroPro (Talabostat, PT-100), a non-selective inhibitor, which triggers pyroptosis in monocytes and macrophages. Dipeptidyl peptidase that cleaves off N-terminal dipeptides from proteins having a Pro or Ala residue at position 2. Acts as a key inhibitor of caspase-1-dependent monocyte and macrophage pyroptosis in resting cells by preventing activation of NLRP1 and CARD8. Sequesters the cleaved C-terminal part of NLRP1 and CARD8, which respectively constitute the active part of the NLRP1 and CARD8 inflammasomes, in a ternary complex, thereby preventing their oligomerization and activation. The dipeptidyl peptidase activity is required to suppress NLRP1 and CARD8; however, neither NLRP1 nor CARD8 are bona fide substrates of DPP8, suggesting the existence of substrate(s) required for NLRP1 and CARD8 inhibition. The polypeptide is Dipeptidyl peptidase 8 (Mus musculus (Mouse)).